Reading from the N-terminus, the 443-residue chain is Threonine/serine transporter TdcC (443 aa).

Transmembrane regions (helical) follow at residues 22 to 42 (TTWTLGLFGTAIGAGVLFFPI), 44 to 64 (AGFGGLIPILLMLVLAYPIAF), 97 to 117 (GVVITFLYFFAICPLLWIYGV), 140 to 160 (FVALFLLLLMAFVIWFGKDLM), 163 to 183 (VMSYLVWPFIASLVLISLSLI), 207 to 227 (ILITVWLGISIMVFSFNFSPI), 261 to 281 (MLMVAVVMFFAFSCLFTLSPA), 311 to 331 (FAITLEYAASIIALVAIFKSF), 366 to 386 (ISMIFIMGSTWVVAYANPNIL), 389 to 409 (IEAMGAPIIASLLCLLPMYAI), and 423 to 443 (DNVFVTVIGLLTILNIVYKLF).

This sequence belongs to the amino acid/polyamine transporter 2 family. SdaC/TdcC subfamily.

It is found in the cell inner membrane. The catalysed reaction is L-threonine(in) + H(+)(in) = L-threonine(out) + H(+)(out). It carries out the reaction L-serine(in) + H(+)(in) = L-serine(out) + H(+)(out). In terms of biological role, involved in the import of threonine and serine into the cell, with the concomitant import of a proton (symport system). The sequence is that of Threonine/serine transporter TdcC from Shigella boydii serotype 18 (strain CDC 3083-94 / BS512).